Consider the following 465-residue polypeptide: ATP synthase subunit beta (465 aa).

152-159 (GGAGVGKT) serves as a coordination point for ATP.

This sequence belongs to the ATPase alpha/beta chains family. F-type ATPases have 2 components, CF(1) - the catalytic core - and CF(0) - the membrane proton channel. CF(1) has five subunits: alpha(3), beta(3), gamma(1), delta(1), epsilon(1). CF(0) has three main subunits: a(1), b(2) and c(9-12). The alpha and beta chains form an alternating ring which encloses part of the gamma chain. CF(1) is attached to CF(0) by a central stalk formed by the gamma and epsilon chains, while a peripheral stalk is formed by the delta and b chains.

The protein resides in the cell membrane. It catalyses the reaction ATP + H2O + 4 H(+)(in) = ADP + phosphate + 5 H(+)(out). Functionally, produces ATP from ADP in the presence of a proton gradient across the membrane. The catalytic sites are hosted primarily by the beta subunits. The polypeptide is ATP synthase subunit beta (Desulfitobacterium hafniense (strain Y51)).